The primary structure comprises 181 residues: Malignant T-cell-amplified sequence 1-A (181 aa).

One can recognise a PUA domain in the interval 92 to 171; it reads LPHQQVDKGA…IGIENIHYLN (80 aa).

The protein belongs to the MCTS1 family.

The protein resides in the cytoplasm. In terms of biological role, plays a role as translation enhancer and involved in cell cycle regulation. The sequence is that of Malignant T-cell-amplified sequence 1-A (mcts1-a) from Xenopus laevis (African clawed frog).